The following is a 293-amino-acid chain: Capsid protein (293 aa).

The tract at residues methionine 1–asparagine 39 is disordered.

It belongs to the potexviruses coat protein family.

The protein localises to the virion. Functionally, required for genome encapsidation. Forms ribonucleoprotein complexes along with TGB1 helicase and viral RNA. This Solanum tuberosum (Potato) protein is Capsid protein.